A 635-amino-acid polypeptide reads, in one-letter code: Early transcription factor 70 kDa subunit (635 aa).

The Helicase ATP-binding domain maps to 32-185 (RSILDENNSV…SNIISIMSDE (154 aa)). Residue 45 to 52 (HIMGSGKT) participates in ATP binding. The DEXH box motif lies at 135–138 (DEAH).

This sequence belongs to the helicase family. VETF subfamily. As to quaternary structure, heterodimer of a 70 kDa and a 82 kDa subunit. Part of the early transcription complex composed of ETF, RAP94, and the DNA-directed RNA polymerase.

Its subcellular location is the virion. Acts with RNA polymerase to initiate transcription from early gene promoters. Is recruited by the RPO-associated protein of 94 kDa (RAP94) to form the early transcription complex, which also contains the core RNA polymerase. ETF heterodimer binds to early gene promoters. The polypeptide is Early transcription factor 70 kDa subunit (VETFS) (Homo sapiens (Human)).